We begin with the raw amino-acid sequence, 215 residues long: Cytochrome b6 (215 aa).

The chain crosses the membrane as a helical span at residues 32–52 (IFYCLGGITLVCFLIQFATGF). Cys35 is a heme c binding site. Heme b-binding residues include His86 and His100. 3 helical membrane passes run 90–110 (ASMM…TGGF), 116–136 (LTWV…VTGY), and 186–206 (AHTF…FLMI). Residues His187 and His202 each contribute to the heme b site.

Belongs to the cytochrome b family. PetB subfamily. The 4 large subunits of the cytochrome b6-f complex are cytochrome b6, subunit IV (17 kDa polypeptide, PetD), cytochrome f and the Rieske protein, while the 4 small subunits are PetG, PetL, PetM and PetN. The complex functions as a dimer. It depends on heme b as a cofactor. Requires heme c as cofactor.

The protein resides in the cellular thylakoid membrane. Component of the cytochrome b6-f complex, which mediates electron transfer between photosystem II (PSII) and photosystem I (PSI), cyclic electron flow around PSI, and state transitions. This chain is Cytochrome b6, found in Trichormus variabilis (strain ATCC 29413 / PCC 7937) (Anabaena variabilis).